The sequence spans 142 residues: Galactose-6-phosphate isomerase subunit LacA (142 aa).

The protein belongs to the LacAB/RpiB family. As to quaternary structure, heteromultimeric protein consisting of LacA and LacB.

It catalyses the reaction aldehydo-D-galactose 6-phosphate = keto-D-tagatose 6-phosphate. It participates in carbohydrate metabolism; D-galactose 6-phosphate degradation; D-tagatose 6-phosphate from D-galactose 6-phosphate: step 1/1. This is Galactose-6-phosphate isomerase subunit LacA from Staphylococcus epidermidis (strain ATCC 35984 / DSM 28319 / BCRC 17069 / CCUG 31568 / BM 3577 / RP62A).